Here is a 704-residue protein sequence, read N- to C-terminus: SH3KBP1-binding protein 1 (704 aa).

Alanine 2 carries the post-translational modification N-acetylalanine. The 70-residue stretch at 19–88 (EVIHLNVGGK…LRTKELDPRG (70 aa)) folds into the BTB domain. Positions 146–165 (VGPQQIGGRPAPVRRSNTMP) are disordered. Threonine 163 bears the Phosphothreonine mark. WD repeat units lie at residues 233 to 280 (RLDW…GGSE), 283 to 322 (VFHL…WQVQ), 324 to 359 (VQPI…LRMK), 428 to 466 (VHRS…GMIS), and 548 to 586 (LECE…DGLG). Positions 609-704 (PLTSSRASFP…PKNTLNETSF (96 aa)) are disordered. Positions 611–631 (TSSRASFPSPSPRTSLTSLHS) are enriched in low complexity. Positions 618 to 623 (PSPSPR) match the PXXXPR motif. Phosphoserine is present on residues serine 644 and serine 646. Residues 678–683 (PTPAPR) carry the PXXXPR motif.

The protein belongs to the KCTD3 family. Monomer. Interacts with CUL3; interaction is direct and forms a 5:5 heterodecamer. Interacts (via PXXXPR motifs) with SH3KBP1 (via SH3 domains). Directly interacts with cathepsin B/CTSB.

The protein localises to the lysosome. Inhibits CBL-SH3KBP1 complex mediated down-regulation of EGFR signaling by sequestration of SH3KBP1. Binds to SH3KBP1 and prevents its interaction with CBL and inhibits translocation of SH3KBP1 to EGFR containing vesicles upon EGF stimulation. The protein is SH3KBP1-binding protein 1 (Shkbp1) of Rattus norvegicus (Rat).